Here is a 218-residue protein sequence, read N- to C-terminus: Octanoyltransferase (218 aa).

The 184-residue stretch at 27-210 folds into the BPL/LPL catalytic domain; it reads TGGEDTLYLV…QFLAIFTHPA (184 aa). Substrate is bound by residues 72–79, 139–141, and 152–154; these read RGGNITCH, SIG, and GLA. Catalysis depends on Cys170, which acts as the Acyl-thioester intermediate.

Belongs to the LipB family.

It is found in the cytoplasm. It catalyses the reaction octanoyl-[ACP] + L-lysyl-[protein] = N(6)-octanoyl-L-lysyl-[protein] + holo-[ACP] + H(+). Its pathway is protein modification; protein lipoylation via endogenous pathway; protein N(6)-(lipoyl)lysine from octanoyl-[acyl-carrier-protein]: step 1/2. Catalyzes the transfer of endogenously produced octanoic acid from octanoyl-acyl-carrier-protein onto the lipoyl domains of lipoate-dependent enzymes. Lipoyl-ACP can also act as a substrate although octanoyl-ACP is likely to be the physiological substrate. The protein is Octanoyltransferase of Nitratidesulfovibrio vulgaris (strain ATCC 29579 / DSM 644 / CCUG 34227 / NCIMB 8303 / VKM B-1760 / Hildenborough) (Desulfovibrio vulgaris).